Consider the following 454-residue polypeptide: MTDRTCLSIVLAAGEGTRMKSNLPKVLHRVAGLPLVCHVVNAVRGTGKSDVALVVGRGAEDVRSAVEKIAGPVSAFEQKERLGTAHAVLAAREAIARGYDDLLIVFGDTPLIEAQSLLAARERLAQGADLVVIGFRPASPHGYGRLIEEGGQLVAIIEEKEATDEQKKIGFCNGGLMALRGQHALALLDAVGNDNAKGEYYLTDIVAIAHGKGLNVTAIEVPVDNVIGINNRAELAEAETIWQNRKRRELMLSGVTLIAPETVFFSYDTVIEPDVVIEPNVFFGPSVHVASGALIHSFSHLEGAQVGEKAEIGPFARLRPGADLAEKSKVGNFCEVKNAKVGKGAKINHLTYIGDAVIGASSNIGAGTITCNYDGYNKFKTIIGDNAFIGSNSSLVAPVEIGDNAYIASGSVITADVPADALALGRARQETKEGRAKILREKYAAIKAAKSVSK.

Residues 1–232 (MTDRTCLSIV…VDNVIGINNR (232 aa)) form a pyrophosphorylase region. Residues 11–14 (LAAG), K25, Q78, and 83–84 (GT) contribute to the UDP-N-acetyl-alpha-D-glucosamine site. Residue D108 participates in Mg(2+) binding. G144, E158, N173, and N230 together coordinate UDP-N-acetyl-alpha-D-glucosamine. N230 contributes to the Mg(2+) binding site. Residues 233–253 (AELAEAETIWQNRKRRELMLS) are linker. The segment at 254-454 (GVTLIAPETV…AIKAAKSVSK (201 aa)) is N-acetyltransferase. The UDP-N-acetyl-alpha-D-glucosamine site is built by R319 and K337. H349 (proton acceptor) is an active-site residue. UDP-N-acetyl-alpha-D-glucosamine is bound by residues Y352 and N363. Residues A366, 372-373 (NY), S391, S409, and R426 each bind acetyl-CoA.

The protein in the N-terminal section; belongs to the N-acetylglucosamine-1-phosphate uridyltransferase family. It in the C-terminal section; belongs to the transferase hexapeptide repeat family. Homotrimer. Requires Mg(2+) as cofactor.

It is found in the cytoplasm. It catalyses the reaction alpha-D-glucosamine 1-phosphate + acetyl-CoA = N-acetyl-alpha-D-glucosamine 1-phosphate + CoA + H(+). The enzyme catalyses N-acetyl-alpha-D-glucosamine 1-phosphate + UTP + H(+) = UDP-N-acetyl-alpha-D-glucosamine + diphosphate. It functions in the pathway nucleotide-sugar biosynthesis; UDP-N-acetyl-alpha-D-glucosamine biosynthesis; N-acetyl-alpha-D-glucosamine 1-phosphate from alpha-D-glucosamine 6-phosphate (route II): step 2/2. It participates in nucleotide-sugar biosynthesis; UDP-N-acetyl-alpha-D-glucosamine biosynthesis; UDP-N-acetyl-alpha-D-glucosamine from N-acetyl-alpha-D-glucosamine 1-phosphate: step 1/1. Its pathway is bacterial outer membrane biogenesis; LPS lipid A biosynthesis. Catalyzes the last two sequential reactions in the de novo biosynthetic pathway for UDP-N-acetylglucosamine (UDP-GlcNAc). The C-terminal domain catalyzes the transfer of acetyl group from acetyl coenzyme A to glucosamine-1-phosphate (GlcN-1-P) to produce N-acetylglucosamine-1-phosphate (GlcNAc-1-P), which is converted into UDP-GlcNAc by the transfer of uridine 5-monophosphate (from uridine 5-triphosphate), a reaction catalyzed by the N-terminal domain. The protein is Bifunctional protein GlmU of Brucella canis (strain ATCC 23365 / NCTC 10854 / RM-666).